The sequence spans 531 residues: UDP-glucuronosyltransferase 1A5 (531 aa).

An N-terminal signal peptide occupies residues 1–25 (MGLHVTLQGLAGLLLLLYALPWAEG). Residues Asn-116, Asn-131, Asn-139, Asn-293, and Asn-431 are each glycosylated (N-linked (GlcNAc...) asparagine). The helical transmembrane segment at 489–505 (VIGFLLAIVLTVVFIVY) threads the bilayer.

This sequence belongs to the UDP-glycosyltransferase family. Homodimer. Homooligomer. Interacts with UGT1A1, UGT1A3, UGT1A4, UGT1A6, UGT1A7, UGT1A8, UGT1A9 and UGT1A10 to form heterodimers.

The protein localises to the endoplasmic reticulum membrane. It carries out the reaction glucuronate acceptor + UDP-alpha-D-glucuronate = acceptor beta-D-glucuronoside + UDP + H(+). The catalysed reaction is zolasartan + UDP-alpha-D-glucuronate = zolarsartan-1-N-beta-D-glucuronide + UDP. Functionally, UDP-glucuronosyltransferase (UGT) that catalyzes phase II biotransformation reactions in which lipophilic substrates are conjugated with glucuronic acid to increase the metabolite's water solubility, thereby facilitating excretion into either the urine or bile. Essential for the elimination and detoxification of drugs, xenobiotics and endogenous compounds. Involved in the glucuronidation of the AGTR1 angiotensin receptor antagonist zolarsatan, a drug which can inhibit the effect of angiotensin II. The sequence is that of UDP-glucuronosyltransferase 1A5 from Rattus norvegicus (Rat).